The sequence spans 303 residues: Acetylglutamate kinase (303 aa).

Substrate is bound by residues 76 to 77 (GG), Arg-98, and Asn-199.

It belongs to the acetylglutamate kinase family. ArgB subfamily.

Its subcellular location is the cytoplasm. The enzyme catalyses N-acetyl-L-glutamate + ATP = N-acetyl-L-glutamyl 5-phosphate + ADP. The protein operates within amino-acid biosynthesis; L-arginine biosynthesis; N(2)-acetyl-L-ornithine from L-glutamate: step 2/4. In terms of biological role, catalyzes the ATP-dependent phosphorylation of N-acetyl-L-glutamate. This chain is Acetylglutamate kinase, found in Clavibacter michiganensis subsp. michiganensis (strain NCPPB 382).